Reading from the N-terminus, the 174-residue chain is UPF0113 protein AF_0058 (174 aa).

A PUA domain is found at 87-161 (RNRVWVNERG…KVFVENLVDR (75 aa)).

This sequence belongs to the UPF0113 family.

This chain is UPF0113 protein AF_0058, found in Archaeoglobus fulgidus (strain ATCC 49558 / DSM 4304 / JCM 9628 / NBRC 100126 / VC-16).